Here is a 219-residue protein sequence, read N- to C-terminus: Vesicle-associated membrane protein 711 (219 aa).

An N-acetylalanine modification is found at Ala2. Residues 2 to 189 are Cytoplasmic-facing; the sequence is AILYALVARG…RSNVWWRNCK (188 aa). Positions 7–111 constitute a Longin domain; that stretch reads LVARGTVVLS…AMNEEFSRVL (105 aa). A v-SNARE coiled-coil homology domain is found at 126–186; it reads RINRIKGEMN…RRFRSNVWWR (61 aa). A helical; Anchor for type IV membrane protein transmembrane segment spans residues 190–210; the sequence is LTVLLILLLLVIIYIAVAFLC. The Vesicular segment spans residues 211-219; that stretch reads HGPTLPSCI.

This sequence belongs to the synaptobrevin family. Expressed in flowers, leaves, stems and roots.

The protein resides in the vacuole membrane. It is found in the prevacuolar compartment membrane. Its function is as follows. Involved in the targeting and/or fusion of transport vesicles to their target membrane. This Arabidopsis thaliana (Mouse-ear cress) protein is Vesicle-associated membrane protein 711.